The sequence spans 188 residues: Peroxidase B (188 aa).

It belongs to the peroxidase family. Post-translationally, partially N-glycosylated.

The protein resides in the secreted. It carries out the reaction 2 a phenolic donor + H2O2 = 2 a phenolic radical donor + 2 H2O. The protein is Peroxidase B of Aloe vera (Aloe).